We begin with the raw amino-acid sequence, 106 residues long: UPF0145 protein PSEEN3024 (106 aa).

The protein belongs to the UPF0145 family.

This Pseudomonas entomophila (strain L48) protein is UPF0145 protein PSEEN3024.